Reading from the N-terminus, the 72-residue chain is Translation initiation factor IF-1 (72 aa).

One can recognise an S1-like domain in the interval 1–72 (MSKQDVIELE…SRGRITWRKK (72 aa)).

This sequence belongs to the IF-1 family. Component of the 30S ribosomal translation pre-initiation complex which assembles on the 30S ribosome in the order IF-2 and IF-3, IF-1 and N-formylmethionyl-tRNA(fMet); mRNA recruitment can occur at any time during PIC assembly.

It is found in the cytoplasm. In terms of biological role, one of the essential components for the initiation of protein synthesis. Stabilizes the binding of IF-2 and IF-3 on the 30S subunit to which N-formylmethionyl-tRNA(fMet) subsequently binds. Helps modulate mRNA selection, yielding the 30S pre-initiation complex (PIC). Upon addition of the 50S ribosomal subunit IF-1, IF-2 and IF-3 are released leaving the mature 70S translation initiation complex. The polypeptide is Translation initiation factor IF-1 (Alkaliphilus oremlandii (strain OhILAs) (Clostridium oremlandii (strain OhILAs))).